Consider the following 424-residue polypeptide: MSILIKNGHVIYGENLDVVRADVLIESNRIVSVERNINEAADTVIDATGRVVSPGFINLHTHSPMGLLRGLADDLPLMEWLQNHIWPREAKLTPEYVKVGAYLGALEMIRSGTTTFLDMYFHMDKVAEAVLDAGLRGYLSYGMIDLGDPDRTEKELKEALREMEAIEKLNSERVHFVFGPHAPYTCSIALLKEVRKLASEHNKLITIHVSETMAEIGQITERYGKSPVVLLDDIGFLGNDVIIAHGVWLDSRDIQILARHGVTVAHNPGSNMKLASGVMPLEKLLNAGVNIGLGTDGSASNNNLDMLEEMKLAALLHKVHNLDPTIADARTVFRMATQNGAKALRLNAGIIKEGYLADIAIINFNRPHLRPINDVISHLVYSANGNDVETTIVDGKILMLDGEVLTLDEEKVISEAEKVSEKLA.

His-60 and His-62 together coordinate Zn(2+). 2 residues coordinate substrate: Glu-89 and His-181. His-208 is a binding site for Zn(2+). Residues Glu-211 and Asp-296 each contribute to the substrate site. Position 296 (Asp-296) interacts with Zn(2+).

The protein belongs to the metallo-dependent hydrolases superfamily. MTA/SAH deaminase family. Requires Zn(2+) as cofactor.

It carries out the reaction S-adenosyl-L-homocysteine + H2O + H(+) = S-inosyl-L-homocysteine + NH4(+). The catalysed reaction is S-methyl-5'-thioadenosine + H2O + H(+) = S-methyl-5'-thioinosine + NH4(+). Functionally, catalyzes the deamination of 5-methylthioadenosine and S-adenosyl-L-homocysteine into 5-methylthioinosine and S-inosyl-L-homocysteine, respectively. Is also able to deaminate adenosine. The chain is 5-methylthioadenosine/S-adenosylhomocysteine deaminase from Thermococcus kodakarensis (strain ATCC BAA-918 / JCM 12380 / KOD1) (Pyrococcus kodakaraensis (strain KOD1)).